A 620-amino-acid polypeptide reads, in one-letter code: Glutathione-regulated potassium-efflux system protein KefC (620 aa).

At 1–3 (MDS) the chain is on the periplasmic side. Residues 4-24 (HTLLQALIYLGSAALIVPIAV) form a helical membrane-spanning segment. Residue Arg25 is a topological domain, cytoplasmic. A helical transmembrane segment spans residues 26-46 (LGLGSVLGYLIAGCIIGPWGL). Residues 47–53 (RLVTDAE) lie on the Periplasmic side of the membrane. A helical membrane pass occupies residues 54–74 (SILHFAEIGVVLMLFVIGLEL). The Cytoplasmic segment spans residues 75-89 (DPQRLWKLRASVFGG). The chain crosses the membrane as a helical span at residues 90-110 (GALQMVVCGGLIGLFCMFLGL). Residues 111 to 113 (RWQ) are Periplasmic-facing. A helical transmembrane segment spans residues 114–134 (VAELIGMTLALSSTAIAMQAM). Over 135-148 (NERNLTVSQVGRSA) the chain is Cytoplasmic. The helical transmembrane segment at 149 to 169 (FAVLLFQDIAAIPLVAMIPLL) threads the bilayer. Over 170–177 (AASGASTT) the chain is Periplasmic. The chain crosses the membrane as a helical span at residues 178–198 (LGAFALSALKVAGALALVVLL). At 199-213 (GRYVTRPALRFVARS) the chain is on the cytoplasmic side. The helical transmembrane segment at 214–233 (GLREVFSAVALFLVFGFGLL) threads the bilayer. Over 234-236 (LEE) the chain is Periplasmic. A helical membrane pass occupies residues 237–254 (VGLSMAMGAFLAGVLLAS). The Cytoplasmic portion of the chain corresponds to 255–269 (SEYRHALESDIEPFK). A helical membrane pass occupies residues 270-290 (GLLLGLFFIGVGMSIDFGTLV). Residues 291–293 (ENP) are Periplasmic-facing. The chain crosses the membrane as a helical span at residues 294–314 (LRILLLLAGFLAIKIVMLWLV). Topologically, residues 315–326 (ARTLGVPAKQRR) are cytoplasmic. Residues 327-347 (WFAVLLGQGSEFAFVVFGAAQ) traverse the membrane as a helical segment. Residues 348–358 (MADVLEPEWAK) lie on the Periplasmic side of the membrane. The chain crosses the membrane as a helical span at residues 359–379 (ALTLAVALSMAATPIFLVLLT). The Cytoplasmic segment spans residues 380–620 (RMEKTATGEA…ADEPEVKPSI (241 aa)). One can recognise an RCK N-terminal domain in the interval 399–518 (QPRVIVAGFG…AGVAMPERET (120 aa)). A disordered region spans residues 599-620 (QGTAEGKHSGKAADEPEVKPSI). Over residues 603-620 (EGKHSGKAADEPEVKPSI) the composition is skewed to basic and acidic residues.

Belongs to the monovalent cation:proton antiporter 2 (CPA2) transporter (TC 2.A.37) family. KefC subfamily. In terms of assembly, homodimer. Interacts with the regulatory subunit KefF.

It localises to the cell inner membrane. In terms of biological role, pore-forming subunit of a potassium efflux system that confers protection against electrophiles. Catalyzes K(+)/H(+) antiport. This Salmonella typhi protein is Glutathione-regulated potassium-efflux system protein KefC.